The primary structure comprises 226 residues: MPTTQKTLMFLSGFLTSLGSVVVICSILGTQAWITSKIFFTDTISNGTIAITYGLFRGTSSQDLNEGLQELDKNFEVLGILSNSSQKSLHVVVIILLILSLAASLLSSMFTFYNSISNPYQTFLGPMGVYTWNGLSASFVFLTMVLFVGNVDSNHLSEKLSQTLYPDAINKKTTHTYGYSFWLILLVILLNIVTVVIIIFYQKARYHQKQEQRKPVEYAPRDGILF.

A helical membrane pass occupies residues 8–28 (LMFLSGFLTSLGSVVVICSIL). N-linked (GlcNAc...) asparagine glycosylation is found at Asn46 and Asn83. 3 helical membrane-spanning segments follow: residues 92 to 112 (VVII…MFTF), 128 to 148 (GVYT…VLFV), and 181 to 201 (FWLI…IIFY).

The protein belongs to the clarin family.

It is found in the membrane. The sequence is that of Clarin-3 (Clrn3) from Rattus norvegicus (Rat).